We begin with the raw amino-acid sequence, 520 residues long: Developmental regulatory protein wetA (520 aa).

4 disordered regions span residues 110–149, 260–294, 388–453, and 471–496; these read ATHALSTSPSTPPATPRRKPTQSALITPKSIRHRCPNERR, HPSSSTLTNSSPSSADDMFSSSHSSDPHSLSSWQS, TTSQ…GSNK, and LTGVAPSGSSKTKARREQEARDRRRK. Low complexity predominate over residues 261–294; that stretch reads PSSSTLTNSSPSSADDMFSSSHSSDPHSLSSWQS. Over residues 388-401 the composition is skewed to polar residues; that stretch reads TTSQVHNVSRSPSL. The segment covering 420 to 429 has biased composition (basic residues); that stretch reads PVHRRTHSRK. The segment covering 436–453 has biased composition (low complexity); the sequence is NAPKPAKASGSSSRGSNK.

This sequence belongs to the wetA family.

Functionally, brlA, abaA and wetA are pivotal regulators of conidiophore development and conidium maturation. They act individually and together to regulate their own expression and that of numerous other sporulation-specific genes. Plays a crucial role in pigmentation and conidial cell wall integrity. This chain is Developmental regulatory protein wetA, found in Penicillium digitatum (strain PHI26 / CECT 20796) (Green mold).